The sequence spans 141 residues: Large ribosomal subunit protein uL11 (141 aa).

It belongs to the universal ribosomal protein uL11 family. In terms of assembly, part of the ribosomal stalk of the 50S ribosomal subunit. Interacts with L10 and the large rRNA to form the base of the stalk. L10 forms an elongated spine to which L12 dimers bind in a sequential fashion forming a multimeric L10(L12)X complex. In terms of processing, one or more lysine residues are methylated.

Its function is as follows. Forms part of the ribosomal stalk which helps the ribosome interact with GTP-bound translation factors. The protein is Large ribosomal subunit protein uL11 of Chlorobaculum parvum (strain DSM 263 / NCIMB 8327) (Chlorobium vibrioforme subsp. thiosulfatophilum).